A 139-amino-acid polypeptide reads, in one-letter code: MKKSTLLNSELSYLVATLGHTDEITICDAGLPIPDEVTRIDLALTHGVPSFLETVRVILSESQIESVIVAQEFAQVSPVLHEALYRELKAEEQLCGKPIAIQYISHEAFKQRTLQSRAVVRTGECTPYANVIFQAGVVF.

The active-site Proton donor is histidine 20. Substrate contacts are provided by residues aspartate 28, histidine 106, and 128–130 (YAN).

Belongs to the RbsD / FucU family. RbsD subfamily. In terms of assembly, homodecamer.

Its subcellular location is the cytoplasm. The enzyme catalyses beta-D-ribopyranose = beta-D-ribofuranose. Its pathway is carbohydrate metabolism; D-ribose degradation; D-ribose 5-phosphate from beta-D-ribopyranose: step 1/2. In terms of biological role, catalyzes the interconversion of beta-pyran and beta-furan forms of D-ribose. In Vibrio cholerae serotype O1 (strain ATCC 39541 / Classical Ogawa 395 / O395), this protein is D-ribose pyranase.